The following is a 90-amino-acid chain: MEQAIAPPLPIRDYQYQTPSIPGSSDYAWRTFVFVTFGLLIAVGVAWLAYTLFLKDLILVCKAKKQRRTEEIGYGNTPARLNGDQQGLPR.

A helical membrane pass occupies residues 32–52 (FVFVTFGLLIAVGVAWLAYTL).

It belongs to the mastrevirus movement protein family. As to quaternary structure, interacts with the capsid protein (CP). Part of a MP-CP-viral DNA complex.

The protein localises to the host membrane. Functionally, involved in the viral transport within, and between cells. The protein is Movement protein of Wheat dwarf virus (isolate Sweden) (WDV).